Reading from the N-terminus, the 494-residue chain is DEAD-box ATP-dependent RNA helicase 20 (494 aa).

Over residues 1–20 the composition is skewed to basic and acidic residues; that stretch reads MSRFDGRAADPGSYRDRRSE. The interval 1–39 is disordered; sequence MSRFDGRAADPGSYRDRRSEGAFGGGTRAFAPTSKADSA. Over residues 29 to 39 the composition is skewed to low complexity; the sequence is AFAPTSKADSA. The short motif at 91–119 is the Q motif element; that stretch reads REFRDVGFPEYVLQEITKAGFVEPTPIQS. The 176-residue stretch at 122-297 folds into the Helicase ATP-binding domain; sequence WPMALRGRDL…RNFLFDPYKV (176 aa). 135-142 provides a ligand contact to ATP; that stretch reads AETGSGKT. A DEAD box motif is present at residues 245-248; it reads DEAD. The Helicase C-terminal domain maps to 325–470; that stretch reads KLVNLLEDIM…KVSPELANMG (146 aa). The tract at residues 465-494 is disordered; sequence ELANMGRGAPPPSSGHRDRYRGYGGGRSWS.

This sequence belongs to the DEAD box helicase family. DDX5/DBP2 subfamily.

The protein resides in the nucleus. It catalyses the reaction ATP + H2O = ADP + phosphate + H(+). Functionally, ATP-dependent RNA helicase involved nonsense-mediated mRNA decay and ribosome biogenesis through rRNA processing. This chain is DEAD-box ATP-dependent RNA helicase 20, found in Oryza sativa subsp. japonica (Rice).